Here is a 965-residue protein sequence, read N- to C-terminus: Glycine dehydrogenase (decarboxylating) (965 aa).

N6-(pyridoxal phosphate)lysine is present on K711.

Belongs to the GcvP family. As to quaternary structure, the glycine cleavage system is composed of four proteins: P, T, L and H. Requires pyridoxal 5'-phosphate as cofactor.

The catalysed reaction is N(6)-[(R)-lipoyl]-L-lysyl-[glycine-cleavage complex H protein] + glycine + H(+) = N(6)-[(R)-S(8)-aminomethyldihydrolipoyl]-L-lysyl-[glycine-cleavage complex H protein] + CO2. The glycine cleavage system catalyzes the degradation of glycine. The P protein binds the alpha-amino group of glycine through its pyridoxal phosphate cofactor; CO(2) is released and the remaining methylamine moiety is then transferred to the lipoamide cofactor of the H protein. In Psychrobacter cryohalolentis (strain ATCC BAA-1226 / DSM 17306 / VKM B-2378 / K5), this protein is Glycine dehydrogenase (decarboxylating).